The chain runs to 460 residues: Flavin-containing monooxygenase FMO GS-OX-like 9 (460 aa).

An FAD-binding site is contributed by Gly20–Gly25. Gly222–Gly227 contacts NADP(+).

It belongs to the FMO family. It depends on FAD as a cofactor.

Its function is as follows. Catalyzes the conversion of methylthioalkyl glucosinolates of any chain length into methylsulfinylalkyl glucosinolates. The protein is Flavin-containing monooxygenase FMO GS-OX-like 9 of Arabidopsis thaliana (Mouse-ear cress).